Here is a 226-residue protein sequence, read N- to C-terminus: Enolase-phosphatase E1 (226 aa).

Belongs to the HAD-like hydrolase superfamily. MasA/MtnC family. Monomer. Mg(2+) is required as a cofactor.

It catalyses the reaction 5-methylsulfanyl-2,3-dioxopentyl phosphate + H2O = 1,2-dihydroxy-5-(methylsulfanyl)pent-1-en-3-one + phosphate. The protein operates within amino-acid biosynthesis; L-methionine biosynthesis via salvage pathway; L-methionine from S-methyl-5-thio-alpha-D-ribose 1-phosphate: step 3/6. It participates in amino-acid biosynthesis; L-methionine biosynthesis via salvage pathway; L-methionine from S-methyl-5-thio-alpha-D-ribose 1-phosphate: step 4/6. Functionally, bifunctional enzyme that catalyzes the enolization of 2,3-diketo-5-methylthiopentyl-1-phosphate (DK-MTP-1-P) into the intermediate 2-hydroxy-3-keto-5-methylthiopentenyl-1-phosphate (HK-MTPenyl-1-P), which is then dephosphorylated to form the acireductone 1,2-dihydroxy-3-keto-5-methylthiopentene (DHK-MTPene). The sequence is that of Enolase-phosphatase E1 from Shewanella baltica (strain OS155 / ATCC BAA-1091).